The following is a 375-amino-acid chain: Chaperone protein DnaJ (375 aa).

The region spanning 5–70 (DFYEVLGVEK…QKRAQYDQFG (66 aa)) is the J domain. The CR-type zinc finger occupies 134–216 (GVEKEVSITK…CKGKGTVRKQ (83 aa)). The Zn(2+) site is built by cysteine 147, cysteine 150, cysteine 164, cysteine 167, cysteine 190, cysteine 193, cysteine 204, and cysteine 207. CXXCXGXG motif repeat units follow at residues 147–154 (CETCTGTG), 164–171 (CPKCNGSG), 190–197 (CDMCGGKG), and 204–211 (CSDCKGKG).

It belongs to the DnaJ family. Homodimer. Requires Zn(2+) as cofactor.

The protein localises to the cytoplasm. In terms of biological role, participates actively in the response to hyperosmotic and heat shock by preventing the aggregation of stress-denatured proteins and by disaggregating proteins, also in an autonomous, DnaK-independent fashion. Unfolded proteins bind initially to DnaJ; upon interaction with the DnaJ-bound protein, DnaK hydrolyzes its bound ATP, resulting in the formation of a stable complex. GrpE releases ADP from DnaK; ATP binding to DnaK triggers the release of the substrate protein, thus completing the reaction cycle. Several rounds of ATP-dependent interactions between DnaJ, DnaK and GrpE are required for fully efficient folding. Also involved, together with DnaK and GrpE, in the DNA replication of plasmids through activation of initiation proteins. The sequence is that of Chaperone protein DnaJ from Clostridium tetani (strain Massachusetts / E88).